The primary structure comprises 748 residues: Junctophilin-3 (748 aa).

Topologically, residues 1–727 (MSSGGRFNFD…LKSSTGSAPI (727 aa)) are cytoplasmic. 6 MORN repeats span residues 15–37 (YCGG…KGQG), 39–60 (YTGS…SGNT), 61–82 (YQGT…GKWV), 83–105 (YKGE…GNGA), 107–129 (YEGT…DGGT), and 130–152 (YQGQ…PYGM). The segment at 230–259 (SKSSLASQRSKQSSFRSEAGMSTVSSTASD) is disordered. Positions 231 to 244 (KSSLASQRSKQSSF) are enriched in low complexity. The span at 249–259 (GMSTVSSTASD) shows a compositional bias: polar residues. MORN repeat units follow at residues 288–310 (YVGE…DGLK) and 311–333 (YEGE…DGTK). The tract at residues 416 to 496 (AKEFSPSFQH…TPPPAPAARN (81 aa)) is disordered. Serine 440 bears the Phosphoserine mark. Polar residues predominate over residues 448–457 (STGTPLQQES). Phosphothreonine is present on threonine 451. At serine 457 the chain carries Phosphoserine. Threonine 471 is subject to Phosphothreonine. Serine 475 and serine 506 each carry phosphoserine. Disordered regions lie at residues 526 to 597 (CARS…SPGG) and 624 to 649 (HPQK…EDRG). The segment covering 639–649 (LGDDHRPEDRG) has biased composition (basic and acidic residues). Residues serine 703 and serine 710 each carry the phosphoserine modification. The helical; Anchor for type IV membrane protein transmembrane segment at 728-748 (LVVMVILLNIGVAILFINFFI) threads the bilayer.

It belongs to the junctophilin family. As to expression, specifically expressed in brain.

It localises to the cell membrane. Its subcellular location is the endoplasmic reticulum membrane. Junctophilins contribute to the formation of junctional membrane complexes (JMCs) which link the plasma membrane with the endoplasmic or sarcoplasmic reticulum in excitable cells. Provides a structural foundation for functional cross-talk between the cell surface and intracellular calcium release channels. JPH3 is brain-specific and appears to have an active role in certain neurons involved in motor coordination and memory. The polypeptide is Junctophilin-3 (JPH3) (Homo sapiens (Human)).